We begin with the raw amino-acid sequence, 1105 residues long: MSSNSFAYNEQSGGGEAAELGQEATSTISPSGAFGLFSSDWKKNEDLKQMLESNKDSAKLDAMKRIVGMIAKGKNASELFPAVVKNVASKNIEIKKLVYVYLVRYAEEQQDLALLSISTFQRALKDPNQLIRASALRVLSSIRVPIIVPVMMLAIKEASADLSPYVRKNAAHAIQKLYSLDPEQKEMLIEVIEKLLKDKSTLVAGSVVMAFEEVCPDRIDLIHRNYRKLCNLLVDVEEWGQVVIIHMLTRYARTQFVSPWREDGGLEDNEKNFYESEEEEEEKEKSSRKKSYAMDPDHRLLIRNTKPLLQSRNAAVVMAVAQLYWHISPKSEAGVISKSLVRLLRSNREVQYIVLQNIATMSIERKGMFEPYLKSFYVRSTDPTMIKTLKLEILTNLANEANISTLLREFQTYVRSQDKQFAAATIQTIGRCATSISEVTDTCLNGLVCLLSNRDEIVVAESVVVIKKLLQMQPAQHGEIIRHMAKLLDSITVPVARASILWLIGENCERVPKIAPDVLRKMAKSFTSEDDLVKLQILNLAAKLYLTNSKQTKLLTQYILNLGKYDQNYDIRDRTRFIRQLIVPNEKSGALSKYAKKIFLAPKPAPLLESPFKDRDRFQLGTLSHTLNIKASGYLELSNWPEVAPDPSVRNVEVIESAKEWTPLGKTKKEKPMKKFYSESEEEEDEDEDEDEEEEEKEDEDENPSDSSSDSESGSGSESGDTGTEDSSEDSSSGQDSETGSQAEAERQKVAKRNSKTKRKSDSENREKKNENSKASESSSEESSSMEDSSSESESESGSDSEPAPRNVAPAKERKPQQERHPPSKDVFLLDLDDFNPVSTPVALPTPALSPSLIADLEGLNLSTSSSVINVSTPVFVPTKTHELLHRMHGKGLAAHYCFPRQPCIFSDKMVSVQITLTNTSDRKIENIHIGGKGLPVGMQMHAFHPIDSLEPKGSVTVSVGIDFCDSTQTASFQLCTKDDCFNVTLQPPVGELLSPVAMSEKDFKKEQGTLTGMNETSATLIAAPQNFTPSMILQKVVNVANLGAVPSSQDNVHRFAARTVHSGSLMLVTVELKEGSTAQLIINTEKTVIGSVLLRELKPVLSQG.

Disordered regions lie at residues 1–26 (MSSN…EATS) and 271–292 (KNFY…KKSY). 2 positions are modified to phosphoserine: Ser-276 and Ser-610. Residues 668–824 (KKEKPMKKFY…KPQQERHPPS (157 aa)) form a disordered region. The span at 679–704 (ESEEEEDEDEDEDEEEEEKEDEDENP) shows a compositional bias: acidic residues. Low complexity-rich tracts occupy residues 705 to 722 (SDSS…SGDT) and 730 to 741 (DSSSGQDSETGS). Residues 750 to 759 (VAKRNSKTKR) show a composition bias toward basic residues. Residues 760 to 774 (KSDSENREKKNENSK) show a composition bias toward basic and acidic residues. Ser-761 and Ser-763 each carry phosphoserine. Low complexity predominate over residues 775–788 (ASESSSEESSSMED). A compositionally biased stretch (acidic residues) spans 789 to 799 (SSSESESESGS). Residues 811–824 (AKERKPQQERHPPS) are compositionally biased toward basic and acidic residues.

This sequence belongs to the adaptor complexes large subunit family. Adaptor protein complex 3 (AP-3) is a heterotetramer composed of two large adaptins (delta-type subunit AP3D1 and beta-type subunit AP3B1 or AP3B2), a medium adaptin (mu-type subunit AP3M1 or AP3M2) and a small adaptin (sigma-type subunit APS1 or AP3S2). AP-3 associates with the BLOC-1 complex. Interacts with KIF3A; interaction is direct; interaction is impaired by pyrophosphorylation of AP3B1. Phosphorylated on serine residues. In terms of processing, pyrophosphorylated by 5-diphosphoinositol pentakisphosphate (5-IP7). Pyrophosphorylation impairs interaction with KIF3A. Serine pyrophosphorylation is achieved by Mg(2+)-dependent, but enzyme independent transfer of a beta-phosphate from a inositol pyrophosphate to a pre-phosphorylated serine residue. In terms of tissue distribution, ubiquitously expressed.

It is found in the cytoplasmic vesicle. The protein resides in the clathrin-coated vesicle membrane. It localises to the golgi apparatus. Its function is as follows. Subunit of non-clathrin- and clathrin-associated adaptor protein complex 3 (AP-3) that plays a role in protein sorting in the late-Golgi/trans-Golgi network (TGN) and/or endosomes. The AP complexes mediate both the recruitment of clathrin to membranes and the recognition of sorting signals within the cytosolic tails of transmembrane cargo molecules. AP-3 appears to be involved in the sorting of a subset of transmembrane proteins targeted to lysosomes and lysosome-related organelles. In concert with the BLOC-1 complex, AP-3 is required to target cargos into vesicles assembled at cell bodies for delivery into neurites and nerve terminals. The sequence is that of AP-3 complex subunit beta-1 (Ap3b1) from Mus musculus (Mouse).